Consider the following 111-residue polypeptide: Tubulin beta chain (111 aa).

Positions 82–111 are disordered; that stretch reads SEYQQYQDATAEDEGEFDEEEAEGEGQEYA. Positions 91–111 are enriched in acidic residues; that stretch reads TAEDEGEFDEEEAEGEGQEYA.

The protein belongs to the tubulin family. Dimer of alpha and beta chains. A typical microtubule is a hollow water-filled tube with an outer diameter of 25 nm and an inner diameter of 15 nM. Alpha-beta heterodimers associate head-to-tail to form protofilaments running lengthwise along the microtubule wall with the beta-tubulin subunit facing the microtubule plus end conferring a structural polarity. Microtubules usually have 13 protofilaments but different protofilament numbers can be found in some organisms and specialized cells. Mg(2+) serves as cofactor.

Its subcellular location is the cytoplasm. The protein resides in the cytoskeleton. Functionally, tubulin is the major constituent of microtubules, a cylinder consisting of laterally associated linear protofilaments composed of alpha- and beta-tubulin heterodimers. Microtubules grow by the addition of GTP-tubulin dimers to the microtubule end, where a stabilizing cap forms. Below the cap, tubulin dimers are in GDP-bound state, owing to GTPase activity of alpha-tubulin. In Lymnaea stagnalis (Great pond snail), this protein is Tubulin beta chain.